The chain runs to 146 residues: Hemoglobin subunit beta (146 aa).

The Globin domain maps to H2–H146. 2 residues coordinate heme b: H63 and H92.

It belongs to the globin family. As to quaternary structure, heterotetramer of two alpha chains and two beta chains. As to expression, red blood cells.

Its function is as follows. Involved in oxygen transport from the lung to the various peripheral tissues. The sequence is that of Hemoglobin subunit beta (HBB) from Psittacula krameri (Rose-ringed parakeet).